The primary structure comprises 671 residues: Heat shock transcription factor hsf-1 (671 aa).

Low complexity-rich tracts occupy residues methionine 1–glutamine 17 and glutamine 38–asparagine 52. The tract at residues methionine 1 to serine 61 is disordered. A DNA-binding domain region spans residues leucine 89–serine 196. A coiled-coil region spans residues asparagine 206 to glutamate 240. 4 disordered regions span residues glutamine 329–histidine 423, tyrosine 437–tyrosine 493, histidine 526–proline 552, and asparagine 612–valine 671. Over residues glycine 370 to glutamate 386 the composition is skewed to polar residues. Over residues glycine 439–glycine 456 the composition is skewed to low complexity. 2 stretches are compositionally biased toward polar residues: residues alanine 474–tyrosine 493 and proline 528–proline 552.

This sequence belongs to the HSF family. Forms homodimers and homotrimers. Component of the DHIC (ddl-1-containing hsf-1 inhibitory complex), which contains at least ddl-1, ddl-2, hsb-1 and hsf-1. Within the complex, interacts with ddl-1. Formation of the DHIC may be dependent upon the Insulin/IGF-1-like signaling (IIS) mediated pathway. In terms of processing, phosphorylated. Sumoylated. Sumoylation may inhibit transcriptional activity in response to heat shock. In terms of tissue distribution, expressed in intestinal cells, body wall muscle cells, and hypodermal cells, as well as many neurons in the head and tail.

The protein resides in the nucleus. It localises to the cytoplasm. Its function is as follows. Functions as a stress-inducible and DNA-binding transcription factor, playing a central role in the transcriptional activation of the heat shock response (HSR), leading to the expression of a large class of molecular chaperones, heat shock proteins (HSPs), that protect cells from cellular insult damage. Upon exposure to heat and other stress stimuli, activates gene transcription through binding to site-specific heat shock elements (HSEs) present in the promoter regions of target genes, such as the HSPs. Binds to inverted 5'-NGAAN-3' pentamer DNA sequences in HSEs. Involved in positive modulation of expression of heat shock protein hsp-16.2 in response to heat shock; may act in concert with homeodomain-interacting protein kinase hpk-1. In response to heat shock or starvation, required for the modulation of lifespan, and protection against aberrant protein aggregation proteotoxicity; may act in parallel with the Insulin/IGF-1-like signaling (IIS) mediated pathway. Plays a role in modulating autophagy, in response to a moderate and short-term heat shock, also known as a hormetic heat shock. Involved in positive modulation of ascaroside pheromone biosynthesis in response to heat shock, perhaps by directly activating transcription of peroxisomal fatty acid beta-oxidation genes. Required in modulating the response to infection by either Gram-negative or Gram-positive bacteria, perhaps acting via regulation of expression of Hsp90/daf-21 and members of the small heat shock protein (HSP20) family. May play a role downstream of the daf-16/FOXO and daf-2 signaling pathway in response to bacterial pathogens. Modulates expression of multiple microRNA genes, in both heat shock-dependent and -independent manner. Independent of heat shock, required to modulate expression of genes involved in larval development, mainly distinct from HSPs; acts in concert with putative transcription factor efl-1/E2F, which may form part of a multiprotein DRM complex. Independent of heat shock, involved in promoting death of the linker cell, a male-specific cell which guides the elongation of the gonad; perhaps acting by modulating expression of ubiquitin-conjugating enzyme let-70. Plays a role in egg-laying. This is Heat shock transcription factor hsf-1 from Caenorhabditis elegans.